A 374-amino-acid chain; its full sequence is Zinc finger CCCH domain-containing protein 15 homolog (374 aa).

2 C3H1-type zinc fingers span residues 89–116 and 167–197; these read DPKS…HDLA and YFLE…HCLP.

This sequence belongs to the ZC3H15/TMA46 family.

The chain is Zinc finger CCCH domain-containing protein 15 homolog from Caenorhabditis briggsae.